The chain runs to 373 residues: Gametogenetin-binding protein 1 (373 aa).

2 disordered regions span residues 26-113 (VGSK…GSQT) and 237-268 (KAQRPDADAPQFALKDSSPTEERGEREEAVDE). Positions 36–49 (NRPLNRSQPSSSPE) are enriched in polar residues. Residues 226-373 (LYKQLQKSAM…DEMGNWPPPE (148 aa)) are required for induction of mitochondrial fragmentation. Over residues 254–263 (SPTEERGERE) the composition is skewed to basic and acidic residues. An interaction with GGN region spans residues 301–373 (KTFRSTDTVG…DEMGNWPPPE (73 aa)).

As to quaternary structure, interacts with CCDC159. Interacts with GGN.

It is found in the cytoplasm. It localises to the membrane. The protein localises to the golgi apparatus. Its subcellular location is the mitochondrion intermembrane space. Functionally, induces mitochondrial fragmentation, possibly by promoting DNM1L-dependent fission and may play a role in mitochondrial morphogenesis during spermatogenesis. The protein is Gametogenetin-binding protein 1 (Ggnbp1) of Rattus norvegicus (Rat).